Here is a 337-residue protein sequence, read N- to C-terminus: Holliday junction branch migration complex subunit RuvB (337 aa).

The large ATPase domain (RuvB-L) stretch occupies residues 1-179 (MTHQVSVLHQ…FSFSGRVSYY (179 aa)). ATP is bound by residues Leu18, Arg19, Gly60, Lys63, Thr64, Ser65, 126-128 (EDY), Arg169, Tyr179, and Arg216. Residue Thr64 participates in Mg(2+) binding. The small ATPAse domain (RuvB-S) stretch occupies residues 180–250 (SDEDLATILK…VAEKALSMLL (71 aa)). Residues 253–337 (DWGLNEIDIK…DNLQILGEEK (85 aa)) form a head domain (RuvB-H) region. DNA contacts are provided by Lys308 and Arg313.

The protein belongs to the RuvB family. Homohexamer. Forms an RuvA(8)-RuvB(12)-Holliday junction (HJ) complex. HJ DNA is sandwiched between 2 RuvA tetramers; dsDNA enters through RuvA and exits via RuvB. An RuvB hexamer assembles on each DNA strand where it exits the tetramer. Each RuvB hexamer is contacted by two RuvA subunits (via domain III) on 2 adjacent RuvB subunits; this complex drives branch migration. In the full resolvosome a probable DNA-RuvA(4)-RuvB(12)-RuvC(2) complex forms which resolves the HJ.

The protein localises to the cytoplasm. The catalysed reaction is ATP + H2O = ADP + phosphate + H(+). The RuvA-RuvB-RuvC complex processes Holliday junction (HJ) DNA during genetic recombination and DNA repair, while the RuvA-RuvB complex plays an important role in the rescue of blocked DNA replication forks via replication fork reversal (RFR). RuvA specifically binds to HJ cruciform DNA, conferring on it an open structure. The RuvB hexamer acts as an ATP-dependent pump, pulling dsDNA into and through the RuvAB complex. RuvB forms 2 homohexamers on either side of HJ DNA bound by 1 or 2 RuvA tetramers; 4 subunits per hexamer contact DNA at a time. Coordinated motions by a converter formed by DNA-disengaged RuvB subunits stimulates ATP hydrolysis and nucleotide exchange. Immobilization of the converter enables RuvB to convert the ATP-contained energy into a lever motion, pulling 2 nucleotides of DNA out of the RuvA tetramer per ATP hydrolyzed, thus driving DNA branch migration. The RuvB motors rotate together with the DNA substrate, which together with the progressing nucleotide cycle form the mechanistic basis for DNA recombination by continuous HJ branch migration. Branch migration allows RuvC to scan DNA until it finds its consensus sequence, where it cleaves and resolves cruciform DNA. The polypeptide is Holliday junction branch migration complex subunit RuvB (Chlamydia felis (strain Fe/C-56) (Chlamydophila felis)).